The chain runs to 255 residues: Menaquinol:cytochrome c reductase cytochrome c subunit (255 aa).

The next 3 helical transmembrane spans lie at 46 to 62, 104 to 124, and 137 to 157; these read WMVG…LTIV, VVGA…APFL, and VAVG…WQSV. One can recognise a Cytochrome c domain in the interval 178-253; it reads DTNAEGYKVF…ELAKFISETT (76 aa). Residues cysteine 192, cysteine 195, and histidine 196 each contribute to the heme c site.

Belongs to the cytochrome b family. As to quaternary structure, the main subunits of the menaquinol:cytochrome c complex are a Rieske-type iron-sulfur protein (QcrA), a cytochrome b (QcrB) and a cytochrome c (QcrC). Heme c serves as cofactor.

Its subcellular location is the cell membrane. Its function is as follows. Component of the menaquinol:cytochrome c reductase complex. In Bacillus subtilis (strain 168), this protein is Menaquinol:cytochrome c reductase cytochrome c subunit (qcrC).